Consider the following 279-residue polypeptide: Protoheme IX farnesyltransferase (279 aa).

The next 9 membrane-spanning stretches (helical) occupy residues 5-25 (LILLKPRVIWLLILASLAGYL), 33-53 (IAQAFSLLLVAFLSTGGAAAF), 84-103 (LAYSLVLSALGIALGFLLLG), 108-125 (LFVFLGWFFYAVVYTVIL), 133-153 (ILGGGFAGNATFLGGYALGAG), 159-179 (AVLISFAIYLWIPSHIWALAY), 201-221 (AAVAIISLLNLASAAYIMTLY), 222-242 (LAFGGGLLGGALVAAGVVATI), and 256-276 (AMWKMYKASSPVLTLFLLALI).

Belongs to the UbiA prenyltransferase family. Protoheme IX farnesyltransferase subfamily.

It is found in the cell membrane. The enzyme catalyses heme b + (2E,6E)-farnesyl diphosphate + H2O = Fe(II)-heme o + diphosphate. It participates in porphyrin-containing compound metabolism; heme O biosynthesis; heme O from protoheme: step 1/1. Converts heme B (protoheme IX) to heme O by substitution of the vinyl group on carbon 2 of heme B porphyrin ring with a hydroxyethyl farnesyl side group. In Pyrobaculum arsenaticum (strain DSM 13514 / JCM 11321 / PZ6), this protein is Protoheme IX farnesyltransferase.